We begin with the raw amino-acid sequence, 594 residues long: 3-hydroxy-3-methylglutaryl coenzyme A reductase 2-A (594 aa).

The tract at residues 1–32 (MDVRRRPVKSLSSAKTATAGEPPKSQQQHPKA) is disordered. Residues 1 to 37 (MDVRRRPVKSLSSAKTATAGEPPKSQQQHPKASDALP) are Lumenal-facing. A helical membrane pass occupies residues 38–58 (LPLYLTNGLFFTMFFSVMYFL). Residues 59-81 (LHRWREKIRNSTPLHVVTLSELA) lie on the Cytoplasmic side of the membrane. The chain crosses the membrane as a helical span at residues 82-102 (ALVLLMASVIYLLGFFGIGFV). Topologically, residues 103–549 (RSVIRPSPDA…SKESPGSNSR (447 aa)) are lumenal. Asn-261 carries N-linked (GlcNAc...) asparagine glycosylation. The active-site Charge relay system is the Glu-273. Residue Asn-337 is glycosylated (N-linked (GlcNAc...) asparagine). Active-site charge relay system residues include Lys-405 and Asp-481. The chain crosses the membrane as a helical span at residues 550-570 (LLASIVAGSVLAGELSLMSAL). The Cytoplasmic segment spans residues 571–594 (AAGQLVKSHMKYNRSSKDITKLSS). The active-site Proton donor is the His-579.

It belongs to the HMG-CoA reductase family. As to expression, mostly expressed in the petioles of seedlings, seedlings and roots, and, to a lower extent, in seeds, leaves, stems and flowers.

Its subcellular location is the endoplasmic reticulum membrane. The protein resides in the plastid. The protein localises to the chloroplast membrane. It localises to the peroxisome membrane. It carries out the reaction (R)-mevalonate + 2 NADP(+) + CoA = (3S)-3-hydroxy-3-methylglutaryl-CoA + 2 NADPH + 2 H(+). The protein operates within metabolic intermediate biosynthesis; (R)-mevalonate biosynthesis; (R)-mevalonate from acetyl-CoA: step 3/3. With respect to regulation, competitive inhibition by mevinolin (Mev) is leading to a significant reduction of total ginsenoside in adventitious roots. Triggered by darkness. In terms of biological role, catalyzes the synthesis of mevalonate, the specific precursor of all isoprenoid compounds present in plants. Component of the triterpene saponins (e.g. ginsenosides or panaxosides) and phytosterols biosynthetic pathways. The protein is 3-hydroxy-3-methylglutaryl coenzyme A reductase 2-A of Panax ginseng (Korean ginseng).